The following is a 697-amino-acid chain: SPX domain-containing membrane protein OsI_08463 (697 aa).

In terms of domain architecture, SPX spans 2–145; that stretch reads VNFGKRLMAD…GYKFTDYYVS (144 aa). 11 helical membrane-spanning segments follow: residues 247–267, 278–298, 315–335, 338–356, 375–395, 411–431, 513–533, 544–564, 576–596, 604–624, and 670–690; these read FMSL…TYII, LGAA…AQVF, LVFS…AYDV, LTVL…ARAV, AGFV…AGLL, LPGW…WISF, LLIY…SSVV, TVAM…VIVG, ILVA…RFTS, VSSA…NLSL, and LLNV…VATF.

Belongs to the major facilitator superfamily.

It localises to the membrane. This Oryza sativa subsp. indica (Rice) protein is SPX domain-containing membrane protein OsI_08463.